The following is a 184-amino-acid chain: Ribosome-recycling factor (184 aa).

Belongs to the RRF family.

The protein resides in the cytoplasm. Functionally, responsible for the release of ribosomes from messenger RNA at the termination of protein biosynthesis. May increase the efficiency of translation by recycling ribosomes from one round of translation to another. This Aster yellows witches'-broom phytoplasma (strain AYWB) protein is Ribosome-recycling factor.